The sequence spans 313 residues: tRNA dimethylallyltransferase (313 aa).

11-18 (GPTAGGKT) is an ATP binding site. Residue 13–18 (TAGGKT) coordinates substrate. Interaction with substrate tRNA stretches follow at residues 36–39 (DSAL), 160–164 (QRIGR), and 243–248 (RCVGYR).

Belongs to the IPP transferase family. Monomer. Requires Mg(2+) as cofactor.

It catalyses the reaction adenosine(37) in tRNA + dimethylallyl diphosphate = N(6)-dimethylallyladenosine(37) in tRNA + diphosphate. Catalyzes the transfer of a dimethylallyl group onto the adenine at position 37 in tRNAs that read codons beginning with uridine, leading to the formation of N6-(dimethylallyl)adenosine (i(6)A). In Neisseria meningitidis serogroup C / serotype 2a (strain ATCC 700532 / DSM 15464 / FAM18), this protein is tRNA dimethylallyltransferase.